Consider the following 473-residue polypeptide: Sphingosine kinase 1 (473 aa).

The 151-residue stretch at 83 to 233 folds into the DAGKc domain; it reads QCRGNLLVFI…VALYSVKTDN (151 aa). Residues 93-95 and 125-129 each bind ATP; these read NPN and TTGPN. Residue 151-154 participates in substrate binding; the sequence is SGDG. Aspartate 153 (proton donor/acceptor) is an active-site residue. ATP is bound by residues glutamate 158 and 184-186; that span reads GSG. Aspartate 251 is a binding site for substrate. Residues arginine 258, arginine 265, and 448–450 contribute to the ATP site; that span reads DGE.

The cofactor is Mg(2+). In terms of tissue distribution, expressed in the majority of cholinergic and GABAergic neurons, body wall muscle, excretory canal cells, intestine, and hypodermis.

The protein localises to the presynaptic cell membrane. It is found in the cell projection. It localises to the axon. The protein resides in the perikaryon. Its subcellular location is the mitochondrion membrane. The enzyme catalyses a sphingoid base + ATP = a sphingoid 1-phosphate + ADP + H(+). It catalyses the reaction 15-methylhexadecasphing-4-enine + ATP = 15-methylhexadecasphing-4-enine 1-phosphate + ADP + H(+). The catalysed reaction is 15-methylhexadecasphinganine + ATP = 15-methylhexadecasphinganine 1-phosphate + ADP + H(+). The protein operates within lipid metabolism; sphingolipid metabolism. Functionally, catalyzes the phosphorylation of sphingoid bases to form sphingoid 1-phosphate (SPP), which have both intra- and extracellular functions. C.elegans contain specific sphingoid bases, which are unique or different in structure compared to the sphingoid bases found in other animals. Two examples of these distinctive compounds are: 15-methylhexadecasphinganine and 15-methylhexadecasphing-4-enine. Required for neurotransmitter release from neuromuscular junctions. Acts by recruiting the synaptic vesicle priming protein unc-13 to synapses. The sequence is that of Sphingosine kinase 1 (sphk-1) from Caenorhabditis elegans.